The following is a 144-amino-acid chain: Large ribosomal subunit protein uL15 (144 aa).

The span at 1–10 (MYLNTISPSR) shows a compositional bias: polar residues. Residues 1-51 (MYLNTISPSRGSKHLSKRVGRGIGSGLGKTGGRGHKGQKSRSGGKVRLGFE) are disordered. The segment covering 11-20 (GSKHLSKRVG) has biased composition (basic residues). Residues 21–31 (RGIGSGLGKTG) are compositionally biased toward gly residues. Basic residues predominate over residues 32-44 (GRGHKGQKSRSGG).

This sequence belongs to the universal ribosomal protein uL15 family. Part of the 50S ribosomal subunit.

Binds to the 23S rRNA. The polypeptide is Large ribosomal subunit protein uL15 (Blochmanniella pennsylvanica (strain BPEN)).